The primary structure comprises 52 residues: Large ribosomal subunit protein bL32c (52 aa).

This sequence belongs to the bacterial ribosomal protein bL32 family.

It is found in the plastid. The protein localises to the chloroplast. The chain is Large ribosomal subunit protein bL32c from Eucalyptus globulus subsp. globulus (Tasmanian blue gum).